The sequence spans 563 residues: Tripeptidyl-peptidase 1 (563 aa).

The first 19 residues, 1–19 (MGLQACLLGLFALILSGKC), serve as a signal peptide directing secretion. A propeptide spans 20 to 195 (SYSPEPDQRR…PEPQVTGTVG (176 aa)) (removed in mature form). C111 and C122 form a disulfide bridge. The region spanning 199–563 (GVTPSVIRKR…PALLKTLLNP (365 aa)) is the Peptidase S53 domain. N210 and N222 each carry an N-linked (GlcNAc...) asparagine glycan. Catalysis depends on charge relay system residues E272 and D276. N-linked (GlcNAc...) asparagine glycosylation is found at N286, N313, and N443. Cystine bridges form between C365/C526 and C522/C537. The active-site Charge relay system is S475. Residues D517 and V518 each contribute to the Ca(2+) site. Ca(2+)-binding residues include G539, G541, and D543.

Monomer. Interacts with CLN5. Interacts with CLN3. It depends on Ca(2+) as a cofactor. Post-translationally, activated by autocatalytic proteolytical processing upon acidification. N-glycosylation is required for processing and activity.

Its subcellular location is the lysosome. The protein resides in the melanosome. The catalysed reaction is Release of an N-terminal tripeptide from a polypeptide, but also has endopeptidase activity.. Its function is as follows. Lysosomal serine protease with tripeptidyl-peptidase I activity. May act as a non-specific lysosomal peptidase which generates tripeptides from the breakdown products produced by lysosomal proteinases. Requires substrates with an unsubstituted N-terminus. This chain is Tripeptidyl-peptidase 1 (TPP1), found in Macaca fascicularis (Crab-eating macaque).